A 307-amino-acid polypeptide reads, in one-letter code: Membrane protein insertase YidC 2 (307 aa).

The signal sequence occupies residues 1–23 (MKLTLNRILFSGLALSILFTLTG). Residue cysteine 24 is the site of N-palmitoyl cysteine attachment. Cysteine 24 is lipidated: S-diacylglycerol cysteine. 5 helical membrane-spanning segments follow: residues 58–78 (LGYGLAIIIVTIIVRTLILPL), 135–155 (LGGIGCLPLLIQMPFFSAMYF), 179–199 (VLTAIIAALYFFQSWLSMMAV), 209–225 (TMMYTMPIMMIFMSFSL), and 231–251 (LYWLVGGFFSIIQQLITTYLL). Positions 263–307 (YAKNPPKAYQSTSSRKDVTPSQNMEQANLPKKIKSNRNAGKQRKR) are disordered. Residues 271-288 (YQSTSSRKDVTPSQNMEQ) are compositionally biased toward polar residues. The span at 293–307 (KKIKSNRNAGKQRKR) shows a compositional bias: basic residues.

Belongs to the OXA1/ALB3/YidC family. Type 2 subfamily.

The protein localises to the cell membrane. Functionally, required for the insertion and/or proper folding and/or complex formation of integral membrane proteins into the membrane. Involved in integration of membrane proteins that insert both dependently and independently of the Sec translocase complex, as well as at least some lipoproteins. This chain is Membrane protein insertase YidC 2, found in Streptococcus pyogenes serotype M3 (strain ATCC BAA-595 / MGAS315).